The following is a 946-amino-acid chain: DNA primase (946 aa).

Residues arginine 596 to threonine 626 are disordered. The segment covering phenylalanine 617–threonine 626 has biased composition (polar residues). A CHC2-type zinc finger spans residues cysteine 881 to cysteine 920.

The protein belongs to the herpesviridae DNA primase family. Associates with the helicase and the primase-associated factor to form the helicase-primase factor. Interacts with host SNAPIN.

Its subcellular location is the host nucleus. Its function is as follows. Essential component of the helicase/primase complex. Unwinds the DNA at the replication forks and generates single-stranded DNA for both leading and lagging strand synthesis. The primase initiates primer synthesis and thereby produces large amount of short RNA primers on the lagging strand that the polymerase elongates using dNTPs. This Homo sapiens (Human) protein is DNA primase (UL70).